The sequence spans 524 residues: ORC1-type DNA replication protein 4 (524 aa).

Residues 1 to 23 (MTDKSNNPAPASDPSTTETSNDA) show a composition bias toward polar residues. Residues 1 to 67 (MTDKSNNPAP…DDPSDEASRG (67 aa)) form a disordered region. Residues 128–132 (TGKTA), Y325, and R337 contribute to the ATP site.

Belongs to the CDC6/cdc18 family.

Its function is as follows. Involved in regulation of DNA replication. In Haloarcula marismortui (strain ATCC 43049 / DSM 3752 / JCM 8966 / VKM B-1809) (Halobacterium marismortui), this protein is ORC1-type DNA replication protein 4 (cdc6d).